The chain runs to 185 residues: Putative lipoprotein LprB (185 aa).

Positions 1–24 (MRRKVRRLTLAVSALVALFPAVAG) are cleaved as a signal peptide. Residue Cys-25 is the site of N-palmitoyl cysteine attachment. Cys-25 carries the S-diacylglycerol cysteine lipid modification. The segment at 26-50 (SDSGDNKPGATIPSTPANAEGRHGP) is disordered.

The protein resides in the cell membrane. This is Putative lipoprotein LprB (lprB) from Mycobacterium bovis (strain ATCC BAA-935 / AF2122/97).